Reading from the N-terminus, the 466-residue chain is A-type ATP synthase subunit B (466 aa).

Belongs to the ATPase alpha/beta chains family. In terms of assembly, has multiple subunits with at least A(3), B(3), C, D, E, F, H, I and proteolipid K(x).

Its subcellular location is the cell membrane. Functionally, component of the A-type ATP synthase that produces ATP from ADP in the presence of a proton gradient across the membrane. The B chain is a regulatory subunit. This Metallosphaera sedula (strain ATCC 51363 / DSM 5348 / JCM 9185 / NBRC 15509 / TH2) protein is A-type ATP synthase subunit B.